The chain runs to 1173 residues: Calcium-transporting ATPase 2 (1173 aa).

The tract at residues 1–24 (MSRQDENSALLANNENNKPSYTGN) is disordered. At 1 to 114 (MSRQDENSAL…LQLVWAAFND (114 aa)) the chain is on the cytoplasmic side. Positions 7–17 (NSALLANNENN) are enriched in low complexity. The chain crosses the membrane as a helical span at residues 115 to 139 (KTMQLLTVAAVVSFVLGLYELWMQP). The Vacuolar segment spans residues 140-152 (PQYDPEGNKIKQV). A helical transmembrane segment spans residues 153–173 (DWIEGVAIMIAVFVVVLVSAA). The Cytoplasmic segment spans residues 174-349 (NDYQKELQFA…LADNISVYGC (176 aa)). A helical membrane pass occupies residues 350–368 (VSAIILFLVLFTRYLFYII). Residues 369 to 388 (PEDGRFHDLDPAQKGSKFMN) lie on the Vacuolar side of the membrane. A helical transmembrane segment spans residues 389–409 (IFITSITVIVVAVPEGLPLAV). Ca(2+) contacts are provided by valine 398 and glutamate 403. Residues 410 to 899 (TLALAFATTR…RCVSVSIKKF (490 aa)) lie on the Cytoplasmic side of the membrane. Aspartate 445 (4-aspartylphosphate intermediate) is an active-site residue. Mg(2+) contacts are provided by aspartate 445 and threonine 447. Residues threonine 447, lysine 643, 762 to 764 (TGD), arginine 816, and lysine 822 contribute to the ATP site. Aspartate 841 contacts Mg(2+). Residue asparagine 844 participates in ATP binding. The chain crosses the membrane as a helical span at residues 900–922 (IQFQLIVNITAVILTFVSSVASS). Asparagine 907 provides a ligand contact to Ca(2+). The Vacuolar segment spans residues 923–929 (DETSVLT). The helical transmembrane segment at 930–950 (AVQLLWINLIMDTLAALALAT) threads the bilayer. Ca(2+) is bound by residues asparagine 937 and aspartate 941. Residues 951–976 (DKPDPNIMDRKPRGRSTSLISVSTWK) lie on the Cytoplasmic side of the membrane. The chain crosses the membrane as a helical span at residues 977 to 998 (MILSQATLQLIVTFILHFYGPE). Residues 999 to 1010 (LFFKKHEDEITS) lie on the Vacuolar side of the membrane. The helical transmembrane segment at 1011 to 1029 (HQQQQLNAMTFNTFVWLQF) threads the bilayer. Over 1030 to 1065 (FTMLVSRKLDEGDGISNWRGRISAANLNFFQDLGRN) the chain is Cytoplasmic. The helical transmembrane segment at 1066–1086 (YYFLTIMAIIGSCQVLIMFFG) threads the bilayer. The Vacuolar portion of the chain corresponds to 1087-1099 (GAPFSIARQTKSM). A helical membrane pass occupies residues 1100–1120 (WITAVLCGMLSLIMGVLVRIC). Topologically, residues 1121–1173 (PDEVAVKVFPAAFVQRFKYVFGLEFLRKNHTGKHDDEEALLEESDSPESTAFY) are cytoplasmic.

The protein belongs to the cation transport ATPase (P-type) (TC 3.A.3) family.

Its subcellular location is the vacuole membrane. It catalyses the reaction Ca(2+)(in) + ATP + H2O = Ca(2+)(out) + ADP + phosphate + H(+). Its function is as follows. This magnesium-dependent enzyme catalyzes the hydrolysis of ATP coupled with the transport of calcium. Transports the calcium to the vacuole and participates in the control of the cytosolic free calcium. This Saccharomyces cerevisiae (strain ATCC 204508 / S288c) (Baker's yeast) protein is Calcium-transporting ATPase 2 (PMC1).